The following is a 408-amino-acid chain: Elongation factor Tu, chloroplastic (408 aa).

The region spanning 10–214 (KPHVNIGTIG…AVDSYIPTPK (205 aa)) is the tr-type G domain. Positions 19-26 (GHVDHGKT) are G1. 19–26 (GHVDHGKT) provides a ligand contact to GTP. T26 lines the Mg(2+) pocket. The segment at 60-64 (GITIN) is G2. Positions 81-84 (DCPG) are G3. Residues 81–85 (DCPGH) and 136–139 (NKED) contribute to the GTP site. The G4 stretch occupies residues 136–139 (NKED). Positions 174–176 (SAL) are G5.

The protein belongs to the TRAFAC class translation factor GTPase superfamily. Classic translation factor GTPase family. EF-Tu/EF-1A subfamily.

It localises to the plastid. Its subcellular location is the chloroplast. The enzyme catalyses GTP + H2O = GDP + phosphate + H(+). GTP hydrolase that promotes the GTP-dependent binding of aminoacyl-tRNA to the A-site of ribosomes during protein biosynthesis. The chain is Elongation factor Tu, chloroplastic (tufA) from Chara connivens (Convergent stonewort).